The primary structure comprises 250 residues: Leucyl/phenylalanyl-tRNA--protein transferase (250 aa).

This sequence belongs to the L/F-transferase family.

The protein localises to the cytoplasm. The catalysed reaction is N-terminal L-lysyl-[protein] + L-leucyl-tRNA(Leu) = N-terminal L-leucyl-L-lysyl-[protein] + tRNA(Leu) + H(+). The enzyme catalyses N-terminal L-arginyl-[protein] + L-leucyl-tRNA(Leu) = N-terminal L-leucyl-L-arginyl-[protein] + tRNA(Leu) + H(+). It carries out the reaction L-phenylalanyl-tRNA(Phe) + an N-terminal L-alpha-aminoacyl-[protein] = an N-terminal L-phenylalanyl-L-alpha-aminoacyl-[protein] + tRNA(Phe). In terms of biological role, functions in the N-end rule pathway of protein degradation where it conjugates Leu, Phe and, less efficiently, Met from aminoacyl-tRNAs to the N-termini of proteins containing an N-terminal arginine or lysine. The sequence is that of Leucyl/phenylalanyl-tRNA--protein transferase from Cupriavidus necator (strain ATCC 17699 / DSM 428 / KCTC 22496 / NCIMB 10442 / H16 / Stanier 337) (Ralstonia eutropha).